A 488-amino-acid chain; its full sequence is DELTA-alicitoxin-Pse2b (488 aa).

Residues 1–21 form the signal peptide; the sequence is MSKPIIFLLTAFVVLTDLGAT. The MACPF domain maps to 24–344; the sequence is TEKVEVKAKP…GYLNFDCAYE (321 aa). One can recognise an EGF-like domain in the interval 369–398; that stretch reads VCKLGPEGCHSDDDCESDDLIYCACCGDSC. Cystine bridges form between Cys-370-Cys-383, Cys-377-Cys-391, and Cys-393-Cys-398.

The protein resides in the secreted. It is found in the nematocyst. In terms of biological role, causes lethal toxicity to the shrimp Palaemon paucidence, and hemolytic activity toward sheep red blood cells. In Phyllodiscus semoni (Night anemone), this protein is DELTA-alicitoxin-Pse2b.